The sequence spans 214 residues: Protein transport protein SEC22 (214 aa).

The Cytoplasmic segment spans residues 1-192 (MIKSTLIFRD…QKINFDLLLS (192 aa)). Residues 6–117 (LIFRDDGLPL…YAFVSFDNFL (112 aa)) form the Longin domain. The v-SNARE coiled-coil homology domain maps to 132-192 (NLDQLNSDLL…QKINFDLLLS (61 aa)). The chain crosses the membrane as a helical; Anchor for type IV membrane protein span at residues 193-213 (QYAPVALIGLFFLFLVWWLVF). Residue R214 is a topological domain, vesicular.

It belongs to the synaptobrevin family.

It localises to the membrane. The protein resides in the endoplasmic reticulum membrane. Its subcellular location is the golgi apparatus membrane. Functionally, required for transport from the ER to the Golgi complex. The polypeptide is Protein transport protein SEC22 (SEC22) (Eremothecium gossypii (strain ATCC 10895 / CBS 109.51 / FGSC 9923 / NRRL Y-1056) (Yeast)).